The primary structure comprises 361 residues: Chorismate synthase (361 aa).

An NADP(+)-binding site is contributed by Arg-48. Residues 126 to 128, Gly-269, 302 to 306, and Asn-328 each bind FMN; these read RSS and KPVPS.

It belongs to the chorismate synthase family. In terms of assembly, homotetramer. FMNH2 serves as cofactor.

The enzyme catalyses 5-O-(1-carboxyvinyl)-3-phosphoshikimate = chorismate + phosphate. The protein operates within metabolic intermediate biosynthesis; chorismate biosynthesis; chorismate from D-erythrose 4-phosphate and phosphoenolpyruvate: step 7/7. Its function is as follows. Catalyzes the anti-1,4-elimination of the C-3 phosphate and the C-6 proR hydrogen from 5-enolpyruvylshikimate-3-phosphate (EPSP) to yield chorismate, which is the branch point compound that serves as the starting substrate for the three terminal pathways of aromatic amino acid biosynthesis. This reaction introduces a second double bond into the aromatic ring system. The polypeptide is Chorismate synthase (Treponema denticola (strain ATCC 35405 / DSM 14222 / CIP 103919 / JCM 8153 / KCTC 15104)).